We begin with the raw amino-acid sequence, 144 residues long: Large ribosomal subunit protein uL15 (144 aa).

The tract at residues methionine 1–lysine 58 is disordered. Positions arginine 21 to alanine 31 are enriched in gly residues.

Belongs to the universal ribosomal protein uL15 family. As to quaternary structure, part of the 50S ribosomal subunit.

Its function is as follows. Binds to the 23S rRNA. The sequence is that of Large ribosomal subunit protein uL15 from Psychromonas ingrahamii (strain DSM 17664 / CCUG 51855 / 37).